The sequence spans 340 residues: Ketol-acid reductoisomerase (NADP(+)) (340 aa).

Residues 3–182 enclose the KARI N-terminal Rossmann domain; it reads VQMEYEKDVK…GAARVGLLET (180 aa). Residues 26 to 29, arginine 49, serine 53, and 83 to 86 contribute to the NADP(+) site; these read YGSQ and DEIQ. Residue histidine 108 is part of the active site. Glycine 134 serves as a coordination point for NADP(+). The KARI C-terminal knotted domain maps to 183-328; the sequence is TYKEETEEDL…AELRKAMPFV (146 aa). The Mg(2+) site is built by aspartate 191, glutamate 195, glutamate 227, and glutamate 231. Serine 252 is a substrate binding site.

It belongs to the ketol-acid reductoisomerase family. Mg(2+) is required as a cofactor.

It catalyses the reaction (2R)-2,3-dihydroxy-3-methylbutanoate + NADP(+) = (2S)-2-acetolactate + NADPH + H(+). The enzyme catalyses (2R,3R)-2,3-dihydroxy-3-methylpentanoate + NADP(+) = (S)-2-ethyl-2-hydroxy-3-oxobutanoate + NADPH + H(+). It participates in amino-acid biosynthesis; L-isoleucine biosynthesis; L-isoleucine from 2-oxobutanoate: step 2/4. The protein operates within amino-acid biosynthesis; L-valine biosynthesis; L-valine from pyruvate: step 2/4. Functionally, involved in the biosynthesis of branched-chain amino acids (BCAA). Catalyzes an alkyl-migration followed by a ketol-acid reduction of (S)-2-acetolactate (S2AL) to yield (R)-2,3-dihydroxy-isovalerate. In the isomerase reaction, S2AL is rearranged via a Mg-dependent methyl migration to produce 3-hydroxy-3-methyl-2-ketobutyrate (HMKB). In the reductase reaction, this 2-ketoacid undergoes a metal-dependent reduction by NADPH to yield (R)-2,3-dihydroxy-isovalerate. The polypeptide is Ketol-acid reductoisomerase (NADP(+)) (Streptococcus thermophilus (strain ATCC BAA-491 / LMD-9)).